A 173-amino-acid polypeptide reads, in one-letter code: Crossover junction endodeoxyribonuclease RuvC (173 aa).

Active-site residues include D8, E67, and D139. Positions 8, 67, and 139 each coordinate Mg(2+).

The protein belongs to the RuvC family. As to quaternary structure, homodimer which binds Holliday junction (HJ) DNA. The HJ becomes 2-fold symmetrical on binding to RuvC with unstacked arms; it has a different conformation from HJ DNA in complex with RuvA. In the full resolvosome a probable DNA-RuvA(4)-RuvB(12)-RuvC(2) complex forms which resolves the HJ. The cofactor is Mg(2+).

The protein resides in the cytoplasm. It catalyses the reaction Endonucleolytic cleavage at a junction such as a reciprocal single-stranded crossover between two homologous DNA duplexes (Holliday junction).. Its function is as follows. The RuvA-RuvB-RuvC complex processes Holliday junction (HJ) DNA during genetic recombination and DNA repair. Endonuclease that resolves HJ intermediates. Cleaves cruciform DNA by making single-stranded nicks across the HJ at symmetrical positions within the homologous arms, yielding a 5'-phosphate and a 3'-hydroxyl group; requires a central core of homology in the junction. The consensus cleavage sequence is 5'-(A/T)TT(C/G)-3'. Cleavage occurs on the 3'-side of the TT dinucleotide at the point of strand exchange. HJ branch migration catalyzed by RuvA-RuvB allows RuvC to scan DNA until it finds its consensus sequence, where it cleaves and resolves the cruciform DNA. The sequence is that of Crossover junction endodeoxyribonuclease RuvC from Shewanella baltica (strain OS223).